We begin with the raw amino-acid sequence, 253 residues long: Transposase for insertion sequence element IS904 (253 aa).

The Integrase catalytic domain maps to 90–253; the sequence is KATAPNKVWL…SPKDFEKYNS (164 aa).

It belongs to the transposase IS3/IS150/IS904 family.

In terms of biological role, involved in the transposition of the insertion sequence. The sequence is that of Transposase for insertion sequence element IS904 (nisX1) from Lactococcus lactis subsp. lactis (strain IL1403) (Streptococcus lactis).